A 304-amino-acid polypeptide reads, in one-letter code: Pseudouridine-5'-phosphate glycosidase (304 aa).

Glu-25 acts as the Proton donor in catalysis. Substrate-binding residues include Lys-86 and Val-106. Mn(2+) is bound at residue Asp-138. Ser-140–Asp-142 is a substrate binding site. Lys-159 (nucleophile) is an active-site residue.

This sequence belongs to the pseudouridine-5'-phosphate glycosidase family. As to quaternary structure, homotrimer. Mn(2+) serves as cofactor.

It catalyses the reaction D-ribose 5-phosphate + uracil = psi-UMP + H2O. In terms of biological role, catalyzes the reversible cleavage of pseudouridine 5'-phosphate (PsiMP) to ribose 5-phosphate and uracil. Functions biologically in the cleavage direction, as part of a pseudouridine degradation pathway. This is Pseudouridine-5'-phosphate glycosidase from Lysinibacillus sphaericus (strain C3-41).